The primary structure comprises 100 residues: Large ribosomal subunit protein uL23 (100 aa).

The protein belongs to the universal ribosomal protein uL23 family. In terms of assembly, part of the 50S ribosomal subunit. Contacts protein L29, and trigger factor when it is bound to the ribosome.

One of the early assembly proteins it binds 23S rRNA. One of the proteins that surrounds the polypeptide exit tunnel on the outside of the ribosome. Forms the main docking site for trigger factor binding to the ribosome. This Shewanella halifaxensis (strain HAW-EB4) protein is Large ribosomal subunit protein uL23.